The primary structure comprises 441 residues: Phenoloxidase-activating enzyme (441 aa).

The signal sequence occupies residues 1–21 (MFLIWTFIVAVLAIQTKSVVA). At Q22 the chain carries Pyrrolidone carboxylic acid. Clip domains follow at residues 23–76 (SCRT…AVCC) and 77–127 (PCNA…SICC). 8 disulfides stabilise this stretch: C24–C75, C34–C65, C40–C76, C78–C126, C88–C117, C94–C127, C164–C305, and C203–C219. The Peptidase S1 domain occupies 174–440 (IVGGAPASID…YLPWIQNTIE (267 aa)). The active-site Charge relay system is H218. Positions 237, 239, 242, and 246 each coordinate Ca(2+). Residue N239 is glycosylated (N-linked (GlcNAc...) asparagine). The active-site Charge relay system is the D285. Residue N334 is glycosylated (N-linked (GlcNAc...) asparagine). 2 cysteine pairs are disulfide-bonded: C356–C377 and C387–C416. S391 acts as the Charge relay system in catalysis.

Belongs to the peptidase S1 family. CLIP subfamily. As to quaternary structure, in the active form, heterodimer of a light chain and a heavy chain; disulfide-linked. Proteolytically cleaved for activation. Cleavage produces a light chain and a catalytic heavy chain which remains covalently associated probably through an interchain disulfide bond. In terms of processing, glycosylated.

Its activity is regulated as follows. Stabilized by calcium. Inhibited by di-isopropyl phosphorofluoridate (DFP), phenylmethanesulfonylfluoride (PMSF), p-nitrophenyl-p'-guanidinobenzonate (p-NPGB), p-chloromercuribenzoate (PCMB), ethylenediaminetetraacetic acid (EDTA), urea and CI-13c. Its function is as follows. Endopeptidase with selective post-Arg cleavage site. Activates prophenoloxidase. Has a probable role in the melanization process as part of the innate immune response. This chain is Phenoloxidase-activating enzyme, found in Bombyx mori (Silk moth).